A 346-amino-acid chain; its full sequence is DNA-directed RNA polymerases I and III subunit RPAC1 (346 aa).

The residue at position 2 (Ala2) is an N-acetylalanine.

It belongs to the archaeal Rpo3/eukaryotic RPB3 RNA polymerase subunit family. Component of the RNA polymerase I and RNA polymerase III complexes consisting of at least 13 and 17 subunits, respectively. Pol I complex consists of a ten-subunit catalytic core composed of POLR1A/RPA1, POLR1B/RPA2, POLR1C/RPAC1, POLR1D/RPAC2, POLR1H/RPA12, POLR2E/RPABC1, POLR2F/RPABC2, POLR2H/RPABC3, POLR2K/RPABC4 and POLR2L/RPABC5; a mobile stalk subunit POLR1F/RPA43 protruding from the core and additional subunits homologous to general transcription factors POLR1E/RPA49 and POLR1G/RPA34. Part of Pol I pre-initiation complex (PIC), in which Pol I core assembles with RRN3 and promoter-bound UTBF and SL1/TIF-IB complex. Pol III complex consists of a ten-subunit catalytic core composed of POLR3A/RPC1, POLR3B/RPC2, POLR1C/RPAC1, POLR1D/RPAC2, POLR3K/RPC10, POLR2E/RPABC1, POLR2F/RPABC2, POLR2H/RPABC3, POLR2K/RPABC4 and POLR2L/RPABC5; a mobile stalk composed of two subunits POLR3H/RPC8 and CRCP/RPC9, protruding from the core and functioning primarily in transcription initiation; and additional subunits homologous to general transcription factors of the RNA polymerase II machinery, POLR3C/RPC3-POLR3F/RPC6-POLR3G/RPC7 heterotrimer required for transcription initiation and POLR3D/RPC4-POLR3E/RPC5 heterodimer involved in both transcription initiation and termination.

It is found in the nucleus. It localises to the cytoplasm. The protein resides in the cytosol. In terms of biological role, DNA-dependent RNA polymerase catalyzes the transcription of DNA into RNA using the four ribonucleoside triphosphates as substrates. Common component of RNA polymerases I and III which synthesize ribosomal RNA precursors and short non-coding RNAs including 5S rRNA, snRNAs, tRNAs and miRNAs, respectively. POLR1C/RPAC1 is part of the polymerase core and may function as a clamp element that moves to open and close the cleft. The chain is DNA-directed RNA polymerases I and III subunit RPAC1 (POLR1C) from Bos taurus (Bovine).